Reading from the N-terminus, the 155-residue chain is MSRRSTAEKKTAKSDPIYHNRLVNMVVNRILKNGKKSLAYRILYRAIKNIQQKTEKNPLSVLRQAIRRVTPNVTVKARRVGGSTYRVPTEIRSTQGKVLAIRWLLGASRKRLGRNMKFKLSHELMDAARGNGNAIRKKEETHRMAEANRAFAHFR.

Belongs to the universal ribosomal protein uS7 family. As to quaternary structure, part of the 30S ribosomal subunit.

Its subcellular location is the plastid. It localises to the chloroplast. In terms of biological role, one of the primary rRNA binding proteins, it binds directly to 16S rRNA where it nucleates assembly of the head domain of the 30S subunit. The protein is Small ribosomal subunit protein uS7c (rps7) of Pinus koraiensis (Korean pine).